Consider the following 408-residue polypeptide: RNA-splicing ligase RtcB (408 aa).

Mn(2+) contacts are provided by aspartate 75, cysteine 78, histidine 168, histidine 185, and histidine 281. 167 to 171 serves as a coordination point for GMP; that stretch reads NHFIE. Residues 281–282, 313–316, serine 320, 337–340, and lysine 407 contribute to the GMP site; these read HN, PGSM, and HGAG. The GMP-histidine intermediate role is filled by histidine 337.

Belongs to the RtcB family. As to quaternary structure, monomer. Mn(2+) is required as a cofactor.

The catalysed reaction is a 3'-end 3'-phospho-ribonucleotide-RNA + a 5'-end dephospho-ribonucleoside-RNA + GTP = a ribonucleotidyl-ribonucleotide-RNA + GMP + diphosphate. The enzyme catalyses a 3'-end 2',3'-cyclophospho-ribonucleotide-RNA + a 5'-end dephospho-ribonucleoside-RNA + GTP + H2O = a ribonucleotidyl-ribonucleotide-RNA + GMP + diphosphate + H(+). Its function is as follows. GTP-dependent RNA ligase that is involved in RNA repair. Joins RNA with 2',3'-cyclic-phosphate or 3'-phosphate ends to RNA with 5'-hydroxy ends. Also acts as a DNA ligase in case of DNA damage by splicing 'dirty' DNA breaks, characterized by 3'-phosphate (or cyclic-phosphate) and 5'-hydroxy ends that cannot be sealed by classical DNA ligases. Repairs tRNA cleaved by colicins D or E5, does not repair damaged 16S rRNA. Able to catalyze tRNA splicing in vivo in yeast, but bacteria are not known to splice tRNA. This is RNA-splicing ligase RtcB from Escherichia coli (strain K12).